We begin with the raw amino-acid sequence, 171 residues long: S-ribosylhomocysteine lyase (171 aa).

Fe cation-binding residues include His54, His58, and Cys128.

The protein belongs to the LuxS family. As to quaternary structure, homodimer. Fe cation serves as cofactor.

It catalyses the reaction S-(5-deoxy-D-ribos-5-yl)-L-homocysteine = (S)-4,5-dihydroxypentane-2,3-dione + L-homocysteine. In terms of biological role, involved in the synthesis of autoinducer 2 (AI-2) which is secreted by bacteria and is used to communicate both the cell density and the metabolic potential of the environment. The regulation of gene expression in response to changes in cell density is called quorum sensing. Catalyzes the transformation of S-ribosylhomocysteine (RHC) to homocysteine (HC) and 4,5-dihydroxy-2,3-pentadione (DPD). This Yersinia pseudotuberculosis serotype O:1b (strain IP 31758) protein is S-ribosylhomocysteine lyase.